Consider the following 288-residue polypeptide: Diaminopimelate epimerase (288 aa).

Residues Asn-13, Gln-46, and Asn-66 each coordinate substrate. Cys-75 acts as the Proton donor in catalysis. Substrate contacts are provided by residues 76 to 77 (GN), Asn-166, Asn-199, and 217 to 218 (ER). Cys-226 acts as the Proton acceptor in catalysis. Substrate is bound at residue 227–228 (GT).

The protein belongs to the diaminopimelate epimerase family. Homodimer.

It localises to the cytoplasm. It carries out the reaction (2S,6S)-2,6-diaminopimelate = meso-2,6-diaminopimelate. It participates in amino-acid biosynthesis; L-lysine biosynthesis via DAP pathway; DL-2,6-diaminopimelate from LL-2,6-diaminopimelate: step 1/1. Catalyzes the stereoinversion of LL-2,6-diaminopimelate (L,L-DAP) to meso-diaminopimelate (meso-DAP), a precursor of L-lysine and an essential component of the bacterial peptidoglycan. This chain is Diaminopimelate epimerase, found in Cupriavidus metallidurans (strain ATCC 43123 / DSM 2839 / NBRC 102507 / CH34) (Ralstonia metallidurans).